A 142-amino-acid chain; its full sequence is Transcriptional regulator MraZ (142 aa).

2 consecutive SpoVT-AbrB domains span residues 5 to 51 (ASAL…PRPE) and 77 to 120 (AMDV…DSQT).

Belongs to the MraZ family. In terms of assembly, forms oligomers.

The protein localises to the cytoplasm. Its subcellular location is the nucleoid. This Burkholderia cenocepacia (strain ATCC BAA-245 / DSM 16553 / LMG 16656 / NCTC 13227 / J2315 / CF5610) (Burkholderia cepacia (strain J2315)) protein is Transcriptional regulator MraZ.